The following is a 210-amino-acid chain: Probable nicotinate-nucleotide adenylyltransferase (210 aa).

The protein belongs to the NadD family.

The catalysed reaction is nicotinate beta-D-ribonucleotide + ATP + H(+) = deamido-NAD(+) + diphosphate. It functions in the pathway cofactor biosynthesis; NAD(+) biosynthesis; deamido-NAD(+) from nicotinate D-ribonucleotide: step 1/1. Functionally, catalyzes the reversible adenylation of nicotinate mononucleotide (NaMN) to nicotinic acid adenine dinucleotide (NaAD). This is Probable nicotinate-nucleotide adenylyltransferase from Streptococcus pyogenes serotype M6 (strain ATCC BAA-946 / MGAS10394).